Reading from the N-terminus, the 456-residue chain is tRNA-2-methylthio-N(6)-dimethylallyladenosine synthase (456 aa).

Positions 3-120 (KKVYVKTFGC…LPQMIDQRRA (118 aa)) constitute an MTTase N-terminal domain. [4Fe-4S] cluster-binding residues include Cys12, Cys49, Cys83, Cys157, Cys161, and Cys164. One can recognise a Radical SAM core domain in the interval 143–377 (RIDGPSAFVS…QATIEENVQR (235 aa)). Residues 380 to 447 (QAMVGKVERI…PHSLRGELVM (68 aa)) enclose the TRAM domain.

It belongs to the methylthiotransferase family. MiaB subfamily. In terms of assembly, monomer. It depends on [4Fe-4S] cluster as a cofactor.

The protein localises to the cytoplasm. It catalyses the reaction N(6)-dimethylallyladenosine(37) in tRNA + (sulfur carrier)-SH + AH2 + 2 S-adenosyl-L-methionine = 2-methylsulfanyl-N(6)-dimethylallyladenosine(37) in tRNA + (sulfur carrier)-H + 5'-deoxyadenosine + L-methionine + A + S-adenosyl-L-homocysteine + 2 H(+). Functionally, catalyzes the methylthiolation of N6-(dimethylallyl)adenosine (i(6)A), leading to the formation of 2-methylthio-N6-(dimethylallyl)adenosine (ms(2)i(6)A) at position 37 in tRNAs that read codons beginning with uridine. In Paraburkholderia phymatum (strain DSM 17167 / CIP 108236 / LMG 21445 / STM815) (Burkholderia phymatum), this protein is tRNA-2-methylthio-N(6)-dimethylallyladenosine synthase.